The sequence spans 486 residues: Cardiolipin synthase A (486 aa).

The next 2 helical transmembrane spans lie at 3–23 (TFYT…IAGV) and 38–58 (MAWL…YLSL). PLD phosphodiesterase domains are found at residues 219 to 246 (MDLR…VDPR) and 399 to 426 (EGGL…DMRS). Residues His-224, Lys-226, Asp-231, His-404, Lys-406, and Asp-411 contribute to the active site.

The protein belongs to the phospholipase D family. Cardiolipin synthase subfamily. ClsA sub-subfamily.

The protein localises to the cell inner membrane. It catalyses the reaction 2 a 1,2-diacyl-sn-glycero-3-phospho-(1'-sn-glycerol) = a cardiolipin + glycerol. Functionally, catalyzes the reversible phosphatidyl group transfer from one phosphatidylglycerol molecule to another to form cardiolipin (CL) (diphosphatidylglycerol) and glycerol. The protein is Cardiolipin synthase A of Erwinia tasmaniensis (strain DSM 17950 / CFBP 7177 / CIP 109463 / NCPPB 4357 / Et1/99).